The primary structure comprises 445 residues: 23S rRNA (uracil(1939)-C(5))-methyltransferase RlmD (445 aa).

The 59-residue stretch at 6–64 (RRLPREPFEIAITGLSHEGRGIAHHDERTLFVHGALPGERVRAVYTKRRRSVAEARVVE) folds into the TRAM domain. [4Fe-4S] cluster contacts are provided by Cys77, Cys83, Cys86, and Cys165. Residues Gln274, Phe303, Asn308, Glu324, Asp351, and Asp372 each contribute to the S-adenosyl-L-methionine site. Cys398 acts as the Nucleophile in catalysis.

Belongs to the class I-like SAM-binding methyltransferase superfamily. RNA M5U methyltransferase family. RlmD subfamily.

The catalysed reaction is uridine(1939) in 23S rRNA + S-adenosyl-L-methionine = 5-methyluridine(1939) in 23S rRNA + S-adenosyl-L-homocysteine + H(+). Functionally, catalyzes the formation of 5-methyl-uridine at position 1939 (m5U1939) in 23S rRNA. This Alkalilimnicola ehrlichii (strain ATCC BAA-1101 / DSM 17681 / MLHE-1) protein is 23S rRNA (uracil(1939)-C(5))-methyltransferase RlmD.